Consider the following 395-residue polypeptide: Elongation factor Tu (395 aa).

The tr-type G domain occupies 10-204 (KPHVNIGTIG…AVDEYIPTPQ (195 aa)). Residues 19–26 (GHVDHGKT) form a G1 region. 19-26 (GHVDHGKT) contributes to the GTP binding site. Thr26 contacts Mg(2+). Residues 60–64 (GITIS) are G2. The interval 81–84 (DCPG) is G3. Residues 81–85 (DCPGH) and 136–139 (NKCD) each bind GTP. A G4 region spans residues 136-139 (NKCD). The G5 stretch occupies residues 174–176 (SAL).

The protein belongs to the TRAFAC class translation factor GTPase superfamily. Classic translation factor GTPase family. EF-Tu/EF-1A subfamily. As to quaternary structure, monomer.

It localises to the cytoplasm. The catalysed reaction is GTP + H2O = GDP + phosphate + H(+). GTP hydrolase that promotes the GTP-dependent binding of aminoacyl-tRNA to the A-site of ribosomes during protein biosynthesis. This Anoxybacillus flavithermus (strain DSM 21510 / WK1) protein is Elongation factor Tu.